The primary structure comprises 319 residues: Cytochrome c biogenesis protein CcsA (319 aa).

7 consecutive transmembrane segments (helical) span residues threonine 17–leucine 37, glycine 44–glycine 64, leucine 68–isoleucine 88, methionine 143–isoleucine 163, valine 223–asparagine 243, threonine 257–histidine 271, and valine 286–isoleucine 306.

It belongs to the CcmF/CycK/Ccl1/NrfE/CcsA family. As to quaternary structure, may interact with Ccs1.

The protein localises to the plastid. It is found in the chloroplast thylakoid membrane. In terms of biological role, required during biogenesis of c-type cytochromes (cytochrome c6 and cytochrome f) at the step of heme attachment. This is Cytochrome c biogenesis protein CcsA from Lolium perenne (Perennial ryegrass).